The sequence spans 268 residues: Undecaprenyl-diphosphatase (268 aa).

The next 7 helical transmembrane spans lie at 47-67, 83-103, 109-129, 144-164, 184-204, 218-238, and 246-266; these read FAIL…FFKL, FIIG…IAGK, LFDP…LLWV, YPLL…IPGV, AAEF…VYDF, LVAI…KAFL, and FVLF…ALAL.

The protein belongs to the UppP family.

The protein resides in the cell inner membrane. The enzyme catalyses di-trans,octa-cis-undecaprenyl diphosphate + H2O = di-trans,octa-cis-undecaprenyl phosphate + phosphate + H(+). Its function is as follows. Catalyzes the dephosphorylation of undecaprenyl diphosphate (UPP). Confers resistance to bacitracin. The chain is Undecaprenyl-diphosphatase from Bradyrhizobium sp. (strain BTAi1 / ATCC BAA-1182).